A 360-amino-acid polypeptide reads, in one-letter code: Capsular polysaccharide phosphotransferase LcbA (360 aa).

Belongs to the stealth family.

Its function is as follows. Part of a group II capsule biosynthesis locus. The polypeptide is Capsular polysaccharide phosphotransferase LcbA (lcbA) (Aeromonas hydrophila).